Consider the following 421-residue polypeptide: NAD-specific glutamate dehydrogenase (421 aa).

Residues K70 and K94 each contribute to the substrate site. K106 acts as the Proton donor in catalysis. NAD(+) is bound by residues T191 and N222. Substrate is bound at residue S355.

Belongs to the Glu/Leu/Phe/Val dehydrogenases family. Homohexamer.

It catalyses the reaction L-glutamate + NAD(+) + H2O = 2-oxoglutarate + NH4(+) + NADH + H(+). It participates in amino-acid degradation; L-glutamate degradation via hydroxyglutarate pathway; crotonoyl-CoA from L-glutamate: step 1/5. The protein is NAD-specific glutamate dehydrogenase of Peptoniphilus asaccharolyticus (Peptostreptococcus asaccharolyticus).